The primary structure comprises 168 residues: Peptide deformylase 1 (168 aa).

The Fe cation site is built by Cys91 and His133. The active site involves Glu134. Position 137 (His137) interacts with Fe cation.

Belongs to the polypeptide deformylase family. Requires Fe(2+) as cofactor.

It catalyses the reaction N-terminal N-formyl-L-methionyl-[peptide] + H2O = N-terminal L-methionyl-[peptide] + formate. Its function is as follows. Removes the formyl group from the N-terminal Met of newly synthesized proteins. Requires at least a dipeptide for an efficient rate of reaction. N-terminal L-methionine is a prerequisite for activity but the enzyme has broad specificity at other positions. This Shewanella oneidensis (strain ATCC 700550 / JCM 31522 / CIP 106686 / LMG 19005 / NCIMB 14063 / MR-1) protein is Peptide deformylase 1.